The following is a 268-amino-acid chain: Interferon alpha/beta receptor 2 (268 aa).

The N-terminal stretch at 1-16 (MGPWTLLLLHLPLVVS) is a signal peptide. Residues 17-223 (MLPAPTNVSI…TSPTAANTVP (207 aa)) lie on the Extracellular side of the membrane. Fibronectin type-III domains are found at residues 18-114 (LPAP…LTDT) and 115-217 (LLGP…TSPT). Intrachain disulfides connect cysteine 65/cysteine 74 and cysteine 191/cysteine 211. Residues 224–244 (VVLSVLCAFSLLVVLLCGIVV) traverse the membrane as a helical segment. The Cytoplasmic segment spans residues 245–268 (YSGRLLCMHKPLPKTLSSVPLCGG).

This sequence belongs to the type II cytokine receptor family. In terms of assembly, heterodimer with IFNAR1; forming the receptor for type I interferon.

Its subcellular location is the cell membrane. It is found in the cytoplasm. In terms of biological role, together with IFNAR1, forms the heterodimeric receptor for type I interferons (including interferons alpha, beta, epsilon, omega and kappa). Type I interferon binding activates the JAK-STAT signaling cascade, resulting in transcriptional activation or repression of interferon-regulated genes that encode the effectors of the interferon response. Mechanistically, type I interferon-binding brings the IFNAR1 and IFNAR2 subunits into close proximity with one another, driving their associated Janus kinases (JAKs) (TYK2 bound to IFNAR1 and JAK1 bound to IFNAR2) to cross-phosphorylate one another. The activated kinases phosphorylate specific tyrosine residues on the intracellular domains of IFNAR1 and IFNAR2, forming docking sites for the STAT transcription factors (STAT1, STAT2 and STAT). STAT proteins are then phosphorylated by the JAKs, promoting their translocation into the nucleus to regulate expression of interferon-regulated genes. This Oncorhynchus mykiss (Rainbow trout) protein is Interferon alpha/beta receptor 2.